A 434-amino-acid polypeptide reads, in one-letter code: Trigger factor (434 aa).

The PPIase FKBP-type domain occupies 161–246 (EDRVTVDFTG…LKKVEQRELP (86 aa)).

It belongs to the FKBP-type PPIase family. Tig subfamily.

The protein resides in the cytoplasm. It catalyses the reaction [protein]-peptidylproline (omega=180) = [protein]-peptidylproline (omega=0). In terms of biological role, involved in protein export. Acts as a chaperone by maintaining the newly synthesized protein in an open conformation. Functions as a peptidyl-prolyl cis-trans isomerase. This chain is Trigger factor, found in Sodalis glossinidius (strain morsitans).